The primary structure comprises 332 residues: 2,3-diketo-L-gulonate reductase (332 aa).

Catalysis depends on His-44, which acts as the Proton donor. Residues Ile-168–Ser-174, Trp-224–Lys-225, and Gly-304–Glu-306 each bind NAD(+).

The protein belongs to the LDH2/MDH2 oxidoreductase family. DlgD subfamily. Homodimer.

The protein resides in the cytoplasm. It carries out the reaction 3-dehydro-L-gulonate + NAD(+) = 2,3-dioxo-L-gulonate + NADH + H(+). The enzyme catalyses 3-dehydro-L-gulonate + NADP(+) = 2,3-dioxo-L-gulonate + NADPH + H(+). Functionally, catalyzes the reduction of 2,3-diketo-L-gulonate in the presence of NADH, to form 3-keto-L-gulonate. The protein is 2,3-diketo-L-gulonate reductase of Salmonella agona (strain SL483).